The sequence spans 498 residues: Pentatricopeptide repeat-containing protein At3g61360 (498 aa).

PPR repeat units follow at residues 102 to 132 (TSDS…VRKD), 138 to 172 (SFKS…IFRK), 175 to 205 (GVDE…LHSR), 209 to 243 (DVKT…GFKP), 244 to 278 (NSVT…DFDI), 279 to 313 (TVQI…GLTP), 314 to 348 (DCGA…GIEP), 349 to 385 (DSVT…SLVP), and 386 to 420 (KTPT…GYCP).

The protein belongs to the PPR family. P subfamily.

The sequence is that of Pentatricopeptide repeat-containing protein At3g61360 from Arabidopsis thaliana (Mouse-ear cress).